A 318-amino-acid chain; its full sequence is Isoflavone reductase (318 aa).

Residues 11-17 (GPTGAIG), arginine 36, and lysine 44 contribute to the NADP(+) site. Lysine 144 functions as the Proton acceptor in the catalytic mechanism. Residue arginine 148 coordinates NADP(+).

Belongs to the NmrA-type oxidoreductase family. Isoflavone reductase subfamily.

The catalysed reaction is (3R)-vestitone + NADP(+) = 2'-hydroxyformononetin + NADPH + 2 H(+). The protein operates within phytoalexin biosynthesis; pterocarpan phytoalexin biosynthesis. Reduces achiral isoflavones to chiral isoflavanones during the biosynthesis of chiral pterocarpan phytoalexins. The sequence is that of Isoflavone reductase (IFR) from Cicer arietinum (Chickpea).